A 377-amino-acid chain; its full sequence is Erythronate-4-phosphate dehydrogenase (377 aa).

2 residues coordinate substrate: serine 45 and threonine 67. NAD(+) contacts are provided by residues 127–128, aspartate 147, and threonine 176; that span reads QV. Arginine 209 is a catalytic residue. Aspartate 233 contacts NAD(+). Residue glutamate 238 is part of the active site. The active-site Proton donor is histidine 255. Glycine 258 serves as a coordination point for NAD(+). Tyrosine 259 is a substrate binding site.

It belongs to the D-isomer specific 2-hydroxyacid dehydrogenase family. PdxB subfamily. Homodimer.

The protein localises to the cytoplasm. It catalyses the reaction 4-phospho-D-erythronate + NAD(+) = (R)-3-hydroxy-2-oxo-4-phosphooxybutanoate + NADH + H(+). The protein operates within cofactor biosynthesis; pyridoxine 5'-phosphate biosynthesis; pyridoxine 5'-phosphate from D-erythrose 4-phosphate: step 2/5. Functionally, catalyzes the oxidation of erythronate-4-phosphate to 3-hydroxy-2-oxo-4-phosphonooxybutanoate. In Vibrio vulnificus (strain YJ016), this protein is Erythronate-4-phosphate dehydrogenase.